The primary structure comprises 541 residues: Calcium/calmodulin-dependent protein kinase kinase (541 aa).

The tract at residues 83 to 106 is disordered; the sequence is AVQEDDEAGPHSSNNLAATMSPNL. Residues 93–106 are compositionally biased toward polar residues; sequence HSSNNLAATMSPNL. The region spanning 130 to 411 is the Protein kinase domain; the sequence is YRLMEEIGQG…LHEVKVHTWV (282 aa). ATP contacts are provided by residues 136 to 144 and K159; that span reads IGQGSYGIV. The segment at 169–190 is RP domain; that stretch reads NFACFRQPPPRRNKENAAPSVL. D276 serves as the catalytic Proton acceptor. The autoinhibitory domain stretch occupies residues 437–442; the sequence is ENCVRV. The calmodulin-binding stretch occupies residues 440–465; the sequence is VRVIPRLDTLILVKAMGHRKRFGNPF. The segment at 462-512 is disordered; it reads GNPFRNKLSAQSSIRDRRKSSSVKDPTYVPPPNSPPATSNNNLNSTKVDRP. Positions 497–507 are enriched in low complexity; that stretch reads PATSNNNLNST.

Belongs to the protein kinase superfamily. Ser/Thr protein kinase family. Mg(2+) serves as cofactor. In terms of tissue distribution, expressed in head and tail neurons and vulval muscles.

It localises to the cytoplasm. The catalysed reaction is L-seryl-[protein] + ATP = O-phospho-L-seryl-[protein] + ADP + H(+). It catalyses the reaction L-threonyl-[protein] + ATP = O-phospho-L-threonyl-[protein] + ADP + H(+). Its activity is regulated as follows. Activated by Ca(2+)/calmodulin. Binding of calmodulin may relieve intrasteric autoinhibition. Functionally, calcium/calmodulin-dependent protein kinase which phosphorylates cmk-1. Component of a calcium-triggered signaling cascade involved in CRE-mediated transcriptional activation, probably through cmk-1-mediated crh-1/CREB phosphorylation. Plays a role in salt-avoidance learning behavior via the phosphorylation of cmk-1. In Caenorhabditis elegans, this protein is Calcium/calmodulin-dependent protein kinase kinase.